The chain runs to 128 residues: MAYRKLGRTSSQRKAMLRDLTTDLLINESIVTSEARAKEIRNTVEKMITLGKRGDLHACGQAAAFVRNVIASADYDEATDKYTSATALHKLFSEIAPLYADRTVRYTRILKTEPRRGDAAPMAIIELV.

This sequence belongs to the bacterial ribosomal protein bL17 family. In terms of assembly, part of the 50S ribosomal subunit. Contacts protein L32.

In Streptococcus suis (strain 98HAH33), this protein is Large ribosomal subunit protein bL17.